The sequence spans 275 residues: Formamidopyrimidine-DNA glycosylase (275 aa).

The Schiff-base intermediate with DNA role is filled by Pro-2. The Proton donor role is filled by Glu-3. Residue Lys-58 is the Proton donor; for beta-elimination activity of the active site. Positions 93, 111, and 156 each coordinate DNA. Residues 241-275 (FVYDRAGQPCRVCNTPIRQIVQGQRSTYFCPTCQR) form an FPG-type zinc finger. Arg-265 acts as the Proton donor; for delta-elimination activity in catalysis.

The protein belongs to the FPG family. Monomer. Zn(2+) serves as cofactor.

It catalyses the reaction Hydrolysis of DNA containing ring-opened 7-methylguanine residues, releasing 2,6-diamino-4-hydroxy-5-(N-methyl)formamidopyrimidine.. The enzyme catalyses 2'-deoxyribonucleotide-(2'-deoxyribose 5'-phosphate)-2'-deoxyribonucleotide-DNA = a 3'-end 2'-deoxyribonucleotide-(2,3-dehydro-2,3-deoxyribose 5'-phosphate)-DNA + a 5'-end 5'-phospho-2'-deoxyribonucleoside-DNA + H(+). Functionally, involved in base excision repair of DNA damaged by oxidation or by mutagenic agents. Acts as a DNA glycosylase that recognizes and removes damaged bases. Has a preference for oxidized purines, such as 7,8-dihydro-8-oxoguanine (8-oxoG). Has AP (apurinic/apyrimidinic) lyase activity and introduces nicks in the DNA strand. Cleaves the DNA backbone by beta-delta elimination to generate a single-strand break at the site of the removed base with both 3'- and 5'-phosphates. This Burkholderia lata (strain ATCC 17760 / DSM 23089 / LMG 22485 / NCIMB 9086 / R18194 / 383) protein is Formamidopyrimidine-DNA glycosylase.